Consider the following 467-residue polypeptide: DEAD-box ATP-dependent RNA helicase CshA (467 aa).

The Q motif signature appears at 2 to 30 (TTFQELGLSQEVMKAIERMGFEETTPIQA). A Helicase ATP-binding domain is found at 33 to 203 (IPLSLQNKDV…ERFMNEPELV (171 aa)). An ATP-binding site is contributed by 46 to 53 (AQTGTGKT). The DEAD box motif lies at 151–154 (DEAD). One can recognise a Helicase C-terminal domain in the interval 214–374 (NIQQYYLEVH…RMKPPTLDEA (161 aa)). The disordered stretch occupies residues 428-467 (TTPVQLTEEPPLAVKREKKRGGRPDGSARSRTKKRRITAH). Over residues 457-467 (SRTKKRRITAH) the composition is skewed to basic residues.

Belongs to the DEAD box helicase family. CshA subfamily. In terms of assembly, oligomerizes, may be a member of the RNA degradosome.

The protein resides in the cytoplasm. It carries out the reaction ATP + H2O = ADP + phosphate + H(+). Functionally, DEAD-box RNA helicase possibly involved in RNA degradation. Unwinds dsRNA in both 5'- and 3'-directions, has RNA-dependent ATPase activity. The chain is DEAD-box ATP-dependent RNA helicase CshA from Geobacillus kaustophilus (strain HTA426).